Here is a 318-residue protein sequence, read N- to C-terminus: Olfactory receptor 52D1 (318 aa).

The Extracellular portion of the chain corresponds to methionine 1 to phenylalanine 28. Asparagine 5 carries N-linked (GlcNAc...) asparagine glycosylation. Residues tryptophan 29–isoleucine 49 form a helical membrane-spanning segment. The Cytoplasmic portion of the chain corresponds to leucine 50–alanine 57. The helical transmembrane segment at leucine 58–serine 78 threads the bilayer. At threonine 79–alanine 102 the chain is on the extracellular side. Residues cysteine 100 and cysteine 192 are joined by a disulfide bond. The helical transmembrane segment at glutamine 103 to phenylalanine 123 threads the bilayer. Topologically, residues aspartate 124–alanine 142 are cytoplasmic. Residues valine 143–isoleucine 163 traverse the membrane as a helical segment. At phenylalanine 164–isoleucine 199 the chain is on the extracellular side. The helical transmembrane segment at valine 200–serine 220 threads the bilayer. Residues tyrosine 221 to alanine 240 lie on the Cytoplasmic side of the membrane. Residues leucine 241–serine 261 form a helical membrane-spanning segment. Topologically, residues phenylalanine 262–histidine 277 are extracellular. Residues isoleucine 278–alanine 298 form a helical membrane-spanning segment. The Cytoplasmic portion of the chain corresponds to arginine 299–isoleucine 318.

The protein belongs to the G-protein coupled receptor 1 family.

The protein localises to the cell membrane. Its function is as follows. Odorant receptor. The sequence is that of Olfactory receptor 52D1 (OR52D1) from Homo sapiens (Human).